Here is a 150-residue protein sequence, read N- to C-terminus: Arginine repressor (150 aa).

This sequence belongs to the ArgR family.

The protein resides in the cytoplasm. Its pathway is amino-acid biosynthesis; L-arginine biosynthesis [regulation]. Its function is as follows. Regulates arginine biosynthesis genes. This is Arginine repressor from Finegoldia magna (strain ATCC 29328 / DSM 20472 / WAL 2508) (Peptostreptococcus magnus).